Reading from the N-terminus, the 191-residue chain is Small ribosomal subunit protein eS7 (191 aa).

The protein belongs to the eukaryotic ribosomal protein eS7 family.

The protein is Small ribosomal subunit protein eS7 (RPS7) of Hordeum vulgare (Barley).